A 404-amino-acid chain; its full sequence is Serine palmitoyltransferase (404 aa).

Pyridoxal 5'-phosphate-binding positions include 112-113 (GY), Ser-185, His-213, and Thr-241. Lys-244 bears the N6-(pyridoxal phosphate)lysine mark.

Belongs to the class-II pyridoxal-phosphate-dependent aminotransferase family. Pyridoxal 5'-phosphate is required as a cofactor.

The protein resides in the cytoplasm. The enzyme catalyses L-serine + hexadecanoyl-CoA + H(+) = 3-oxosphinganine + CO2 + CoA. Its pathway is lipid metabolism; sphingolipid metabolism. Functionally, involved in de novo bacterial ceramide synthesis. Catalyzes the condensation of L-serine with palmitoyl-CoA (hexadecanoyl-CoA) to produce 3-oxosphinganine. Can also condense serine and C16:1-CoA, but shows a preference for palmitoyl-CoA. In Caulobacter vibrioides (strain NA1000 / CB15N) (Caulobacter crescentus), this protein is Serine palmitoyltransferase.